Here is a 317-residue protein sequence, read N- to C-terminus: Putative peptide import ATP-binding protein BruAb2_0797 (317 aa).

In terms of domain architecture, ABC transporter spans 7–250 (LSVRGLAKHY…PQHPYTRALL (244 aa)). Position 43–50 (43–50 (GESGSGKT)) interacts with ATP.

This sequence belongs to the ABC transporter superfamily. The complex is composed of two ATP-binding proteins (BruAb2_0796 and BruAb2_0797), two transmembrane proteins (BruAb2_0794) and a solute-binding protein (BruAb2_0792).

Its subcellular location is the cell inner membrane. In terms of biological role, probably part of an ABC transporter complex that could be involved in peptide import. Probably responsible for energy coupling to the transport system. The protein is Putative peptide import ATP-binding protein BruAb2_0797 of Brucella abortus biovar 1 (strain 9-941).